The sequence spans 78 residues: COP9 signalosome complex subunit 5b (78 aa).

This sequence belongs to the peptidase M67A family. CSN5 subfamily. In terms of assembly, component of the CSN complex, probably composed of CSN1, CSN2, CSN3, CSN4, CSN5 (CSN5A or CSN5B), CSN6 (CSN6A or CSN6B), CSN7 and CSN8. A divalent metal cation serves as cofactor.

It is found in the cytoplasm. Its subcellular location is the nucleus. Probable protease subunit of the COP9 signalosome complex (CSN), a complex involved in various cellular and developmental processes such as photomorphogenesis and auxin and jasmonate responses. The CSN complex is an essential regulator of the ubiquitin (Ubl) conjugation pathway by mediating the deneddylation of the cullin subunits of the SCF-type E3 ligase complexes, leading to decrease the Ubl ligase activity of SCF. In the complex, it probably acts as the catalytic center that mediates the cleavage of Nedd8 from cullins. It however has no metalloprotease activity by itself and requires the other subunits of the CSN complex. The CSN complex is involved in repression of photomorphogenesis in darkness by regulating the activity of COP1-containing Ubl ligase complexes. This Brassica oleracea (Wild cabbage) protein is COP9 signalosome complex subunit 5b (CSN5B).